Consider the following 506-residue polypeptide: Histidine ammonia-lyase (506 aa).

Positions 143 to 145 (ASG) form a cross-link, 5-imidazolinone (Ala-Gly). Residue serine 144 is modified to 2,3-didehydroalanine (Ser).

This sequence belongs to the PAL/histidase family. Post-translationally, contains an active site 4-methylidene-imidazol-5-one (MIO), which is formed autocatalytically by cyclization and dehydration of residues Ala-Ser-Gly.

The protein resides in the cytoplasm. The catalysed reaction is L-histidine = trans-urocanate + NH4(+). The protein operates within amino-acid degradation; L-histidine degradation into L-glutamate; N-formimidoyl-L-glutamate from L-histidine: step 1/3. This is Histidine ammonia-lyase from Salmonella paratyphi A (strain ATCC 9150 / SARB42).